Reading from the N-terminus, the 352-residue chain is Glycerol-1-phosphate dehydrogenase [NAD(P)+] (352 aa).

NAD(+) is bound by residues 99–103 (GTKID) and 121–124 (TSPS). D126 is a binding site for substrate. S130 contributes to the NAD(+) binding site. D173 provides a ligand contact to substrate. 2 residues coordinate Zn(2+): D173 and H253. H257 contributes to the substrate binding site. Residue H269 coordinates Zn(2+).

The protein belongs to the glycerol-1-phosphate dehydrogenase family. Zn(2+) serves as cofactor.

It localises to the cytoplasm. It carries out the reaction sn-glycerol 1-phosphate + NAD(+) = dihydroxyacetone phosphate + NADH + H(+). The catalysed reaction is sn-glycerol 1-phosphate + NADP(+) = dihydroxyacetone phosphate + NADPH + H(+). It participates in membrane lipid metabolism; glycerophospholipid metabolism. Its function is as follows. Catalyzes the NAD(P)H-dependent reduction of dihydroxyacetonephosphate (DHAP or glycerone phosphate) to glycerol 1-phosphate (G1P). The G1P thus generated is used as the glycerophosphate backbone of phospholipids in the cellular membranes of Archaea. This Thermoplasma volcanium (strain ATCC 51530 / DSM 4299 / JCM 9571 / NBRC 15438 / GSS1) protein is Glycerol-1-phosphate dehydrogenase [NAD(P)+].